We begin with the raw amino-acid sequence, 275 residues long: 3-methyl-2-oxobutanoate hydroxymethyltransferase (275 aa).

Residues aspartate 44 and aspartate 83 each coordinate Mg(2+). 3-methyl-2-oxobutanoate contacts are provided by residues 44–45, aspartate 83, and lysine 113; that span reads DS. Glutamate 115 lines the Mg(2+) pocket. Glutamate 182 (proton acceptor) is an active-site residue.

This sequence belongs to the PanB family. In terms of assembly, homodecamer; pentamer of dimers. The cofactor is Mg(2+).

It is found in the cytoplasm. It catalyses the reaction 3-methyl-2-oxobutanoate + (6R)-5,10-methylene-5,6,7,8-tetrahydrofolate + H2O = 2-dehydropantoate + (6S)-5,6,7,8-tetrahydrofolate. Its pathway is cofactor biosynthesis; (R)-pantothenate biosynthesis; (R)-pantoate from 3-methyl-2-oxobutanoate: step 1/2. Its function is as follows. Catalyzes the reversible reaction in which hydroxymethyl group from 5,10-methylenetetrahydrofolate is transferred onto alpha-ketoisovalerate to form ketopantoate. This is 3-methyl-2-oxobutanoate hydroxymethyltransferase from Clostridium beijerinckii (strain ATCC 51743 / NCIMB 8052) (Clostridium acetobutylicum).